A 333-amino-acid polypeptide reads, in one-letter code: Glycerol-3-phosphate dehydrogenase [NAD(P)+] (333 aa).

Residues Trp-13, Lys-33, and Lys-108 each coordinate NADPH. 2 residues coordinate sn-glycerol 3-phosphate: Lys-108 and Gly-138. Ser-142 contributes to the NADPH binding site. Positions 193, 246, 256, 257, and 258 each coordinate sn-glycerol 3-phosphate. Lys-193 serves as the catalytic Proton acceptor. Arg-257 lines the NADPH pocket. Residues Val-281 and Glu-283 each coordinate NADPH.

Belongs to the NAD-dependent glycerol-3-phosphate dehydrogenase family.

It is found in the cytoplasm. The catalysed reaction is sn-glycerol 3-phosphate + NAD(+) = dihydroxyacetone phosphate + NADH + H(+). The enzyme catalyses sn-glycerol 3-phosphate + NADP(+) = dihydroxyacetone phosphate + NADPH + H(+). It participates in membrane lipid metabolism; glycerophospholipid metabolism. Its function is as follows. Catalyzes the reduction of the glycolytic intermediate dihydroxyacetone phosphate (DHAP) to sn-glycerol 3-phosphate (G3P), the key precursor for phospholipid synthesis. The chain is Glycerol-3-phosphate dehydrogenase [NAD(P)+] from Bifidobacterium longum (strain DJO10A).